Consider the following 419-residue polypeptide: UDP-N-acetylglucosamine 1-carboxyvinyltransferase (419 aa).

22 to 23 (KN) contacts phosphoenolpyruvate. Residue R92 coordinates UDP-N-acetyl-alpha-D-glucosamine. The Proton donor role is filled by C116. C116 carries the post-translational modification 2-(S-cysteinyl)pyruvic acid O-phosphothioketal. UDP-N-acetyl-alpha-D-glucosamine contacts are provided by residues 121–125 (RPIDQ), D305, and I327.

It belongs to the EPSP synthase family. MurA subfamily.

Its subcellular location is the cytoplasm. The enzyme catalyses phosphoenolpyruvate + UDP-N-acetyl-alpha-D-glucosamine = UDP-N-acetyl-3-O-(1-carboxyvinyl)-alpha-D-glucosamine + phosphate. It participates in cell wall biogenesis; peptidoglycan biosynthesis. Cell wall formation. Adds enolpyruvyl to UDP-N-acetylglucosamine. The sequence is that of UDP-N-acetylglucosamine 1-carboxyvinyltransferase from Trichlorobacter lovleyi (strain ATCC BAA-1151 / DSM 17278 / SZ) (Geobacter lovleyi).